Consider the following 552-residue polypeptide: Metal transporter Nramp6.1 (552 aa).

A glycan (N-linked (GlcNAc...) asparagine) is linked at asparagine 11. Helical transmembrane passes span 55–75, 88–108, 133–155, 159–181, 189–209, 238–258, and 275–295; these read FLSYVGPGFLVSLAYLDPGNL, ELLWVVLVGLIFALTIQSLAA, CLWLLAEIAVMAADIPEVIGTAF, ILFNIPVWFGVLCTGCSTLLLLG, KLELLIAVLVFVMAACFFGEM, IALLGALVMPHNLFLHSALVL, and YFLIESGLALFVAFLINLAVI. N-linked (GlcNAc...) asparagine glycosylation occurs at asparagine 306. Helical transmembrane passes span 338–358, 377–397, 402–422, 438–458, and 478–498; these read IYAIAVLASGQSSTITGTYAG, LVTRCIAITPSLIVSIIGGSS, LIIIASMILSFELPFALIPLL, IYIIVLSWILGLGIIGINIYY, and VFIGIIVFPLMAIYILAVIYL. Residues 511–552 form a disordered region; sequence PNKNDPQQQTNMENGLAKSTEGPEMVDRAPYREDLADIPLPE. Polar residues predominate over residues 514–523; it reads NDPQQQTNME. Over residues 535-545 the composition is skewed to basic and acidic residues; that stretch reads MVDRAPYREDL.

The protein belongs to the NRAMP (TC 2.A.55) family.

The protein resides in the membrane. In terms of biological role, probable divalent metal transporter. In Populus trichocarpa (Western balsam poplar), this protein is Metal transporter Nramp6.1.